Reading from the N-terminus, the 1402-residue chain is DNA-directed RNA polymerase subunit beta' (1402 aa).

Positions 72, 74, 87, and 90 each coordinate Zn(2+). Residues Asp463, Asp465, and Asp467 each coordinate Mg(2+). Residues Cys811, Cys885, Cys892, and Cys895 each coordinate Zn(2+).

The protein belongs to the RNA polymerase beta' chain family. In terms of assembly, the RNAP catalytic core consists of 2 alpha, 1 beta, 1 beta' and 1 omega subunit. When a sigma factor is associated with the core the holoenzyme is formed, which can initiate transcription. Requires Mg(2+) as cofactor. It depends on Zn(2+) as a cofactor.

It catalyses the reaction RNA(n) + a ribonucleoside 5'-triphosphate = RNA(n+1) + diphosphate. Functionally, DNA-dependent RNA polymerase catalyzes the transcription of DNA into RNA using the four ribonucleoside triphosphates as substrates. This is DNA-directed RNA polymerase subunit beta' from Paracoccus denitrificans (strain Pd 1222).